Consider the following 119-residue polypeptide: Basic phospholipase A2 notechis II-5 (119 aa).

7 cysteine pairs are disulfide-bonded: Cys-11/Cys-71, Cys-27/Cys-118, Cys-29/Cys-45, Cys-44/Cys-99, Cys-51/Cys-92, Cys-60/Cys-85, and Cys-78/Cys-90. Residues Tyr-28, Gly-30, and Gly-32 each contribute to the Ca(2+) site. His-48 is a catalytic residue. Asp-49 provides a ligand contact to Ca(2+). Residue Asp-93 is part of the active site.

It belongs to the phospholipase A2 family. Group I subfamily. D49 sub-subfamily. Requires Ca(2+) as cofactor. As to expression, expressed by the venom gland.

Its subcellular location is the secreted. The enzyme catalyses a 1,2-diacyl-sn-glycero-3-phosphocholine + H2O = a 1-acyl-sn-glycero-3-phosphocholine + a fatty acid + H(+). In terms of biological role, snake venom phospholipase A2 (PLA2) that inhibits neuromuscular transmission by blocking acetylcholine release from the nerve termini. Notechis II-5 is less toxic than notexin but has a higher specific phospholipase activity. PLA2 catalyzes the calcium-dependent hydrolysis of the 2-acyl groups in 3-sn-phosphoglycerides. This chain is Basic phospholipase A2 notechis II-5, found in Notechis scutatus scutatus (Mainland tiger snake).